A 180-amino-acid polypeptide reads, in one-letter code: Putative manganese efflux pump MntP (180 aa).

Helical transmembrane passes span 4 to 24, 40 to 60, 64 to 84, 103 to 123, 129 to 149, and 156 to 176; these read FVTI…VALG, LTIG…GKWL, FDVI…VQMA, LLLF…SFGI, FVTV…GLIV, and FLGA…GLKI.

It belongs to the MntP (TC 9.B.29) family.

The protein localises to the cell membrane. In terms of biological role, probably functions as a manganese efflux pump. The polypeptide is Putative manganese efflux pump MntP (Shouchella clausii (strain KSM-K16) (Alkalihalobacillus clausii)).